Here is a 749-residue protein sequence, read N- to C-terminus: uncharacterized protein (749 aa).

The Helicase ATP-binding domain occupies 63 to 243 (FQYVQKGESI…QLTGKPMRLV (181 aa)). 76–83 (TPTASGKT) is a binding site for ATP. Positions 185–188 (DELH) match the DEVH box motif. Residues 276-430 (EVNELAKEFL…SARINPENLI (155 aa)) form the Helicase C-terminal domain.

The protein belongs to the helicase family.

This is an uncharacterized protein from Bacillus subtilis (strain 168).